Here is a 251-residue protein sequence, read N- to C-terminus: Diphthine synthase (251 aa).

S-adenosyl-L-methionine contacts are provided by residues L9, D85, V88, S113 to I114, L165, A202, and H227.

This sequence belongs to the diphthine synthase family. In terms of assembly, homodimer.

The catalysed reaction is 2-[(3S)-amino-3-carboxypropyl]-L-histidyl-[translation elongation factor 2] + 3 S-adenosyl-L-methionine = diphthine-[translation elongation factor 2] + 3 S-adenosyl-L-homocysteine + 3 H(+). It functions in the pathway protein modification; peptidyl-diphthamide biosynthesis. Its function is as follows. S-adenosyl-L-methionine-dependent methyltransferase that catalyzes the trimethylation of the amino group of the modified target histidine residue in translation elongation factor 2 (EF-2), to form an intermediate called diphthine. The three successive methylation reactions represent the second step of diphthamide biosynthesis. The chain is Diphthine synthase from Methanosphaerula palustris (strain ATCC BAA-1556 / DSM 19958 / E1-9c).